A 1018-amino-acid polypeptide reads, in one-letter code: UPF0182 protein Francci3_3781 (1018 aa).

7 helical membrane passes run 13–33 (TKVL…IAIF), 60–80 (ILLF…NIVL), 109–129 (MLLI…LSAA), 167–187 (FLLG…LLTH), 208–228 (AHIS…YYLD), 250–270 (AVLP…VLFI), and 283–303 (LGAG…PAIV). Low complexity-rich tracts occupy residues 886–896 (TTDAGQDGTPA) and 960–980 (SSPA…SVPA). Disordered regions lie at residues 886 to 920 (TTDA…AVGD) and 960 to 1018 (SSPA…PAPG). A compositionally biased stretch (pro residues) spans 981-995 (SPVPASPAAKPPAPS).

Belongs to the UPF0182 family.

It localises to the cell membrane. The protein is UPF0182 protein Francci3_3781 of Frankia casuarinae (strain DSM 45818 / CECT 9043 / HFP020203 / CcI3).